The following is a 177-amino-acid chain: Large ribosomal subunit protein uL6 (177 aa).

It belongs to the universal ribosomal protein uL6 family. Part of the 50S ribosomal subunit.

This protein binds to the 23S rRNA, and is important in its secondary structure. It is located near the subunit interface in the base of the L7/L12 stalk, and near the tRNA binding site of the peptidyltransferase center. The sequence is that of Large ribosomal subunit protein uL6 from Pseudomonas putida (strain W619).